A 239-amino-acid chain; its full sequence is Tetraspanin-9 (239 aa).

Topologically, residues M1–M13 are cytoplasmic. Residues F14–L34 form a helical membrane-spanning segment. Residues S35–N55 are Extracellular-facing. The helical transmembrane segment at L56–I76 threads the bilayer. Residues K77–S85 are Cytoplasmic-facing. The helical transmembrane segment at F86–V106 threads the bilayer. Residues Y107–H203 are Extracellular-facing. A glycan (N-linked (GlcNAc...) asparagine) is linked at N180. Residues V204 to M224 traverse the membrane as a helical segment. Over T225–A239 the chain is Cytoplasmic.

This sequence belongs to the tetraspanin (TM4SF) family.

It localises to the membrane. The protein is Tetraspanin-9 (tspan9) of Xenopus tropicalis (Western clawed frog).